The primary structure comprises 3946 residues: Hybrid PKS-NRPS synthetase lepA (3946 aa).

The Ketosynthase family 3 (KS3) domain occupies 9–440; it reads VEPIAIVGSA…GTNAHVILEG (432 aa). Residues Cys183, His320, and His363 each act as for beta-ketoacyl synthase activity in the active site. Residues 553–871 form a malonyl-CoA:ACP transacylase (MAT) domain region; the sequence is IFTGQGAQWA…PYAGIMRRAT (319 aa). The N-terminal hotdog fold stretch occupies residues 945–1073; that stretch reads HELLGRRAPD…GRLILFKGEG (129 aa). The segment at 945–1238 is dehydratase (DH) domain; that stretch reads HELLGRRAPD…RLQSFTEAKA (294 aa). One can recognise a PKS/mFAS DH domain in the interval 945-1239; it reads HELLGRRAPD…LQSFTEAKAL (295 aa). The active-site Proton acceptor; for dehydratase activity is His977. Residues 1088–1239 are C-terminal hotdog fold; the sequence is LSPLDREMFY…LQSFTEAKAL (152 aa). Residue Asp1147 is the Proton donor; for dehydratase activity of the active site. Positions 1380 to 1580 are methyltransferase (MT) domain; the sequence is LLNRFYTDGR…ATVSDLPSDG (201 aa). The segment at 2093–2266 is ketoreductase (KR) domain; it reads TYWMIGLNSE…AASVIDIGLV (174 aa). Positions 2352–2365 are enriched in low complexity; that stretch reads SSQDSDQSNSTSAS. The disordered stretch occupies residues 2352 to 2372; sequence SSQDSDQSNSTSASIRDQVSS. The 78-residue stretch at 2378-2455 folds into the Carrier 1 domain; the sequence is EGTDVLLRCF…EICAEAIQKF (78 aa). Position 2415 is an O-(pantetheine 4'-phosphoryl)serine (Ser2415). Residues 2474–2531 form a disordered region; that stretch reads KQATASPPEIGREEAQSTSRAGILPTDQDNDNSSDSESQRKSGASSSSGSGTRTPTSI. Positions 2508-2530 are enriched in low complexity; sequence DSESQRKSGASSSSGSGTRTPTS. Residues 2547 to 2976 form a condensation (C) domain region; sequence PMSYAQSRLW…MQIQDGLLND (430 aa). Positions 3000–3402 are adenylation (A) (KR) domain; that stretch reads FSQRAATDAN…GGLIFMGRLD (403 aa). The tract at residues 3492–3511 is disordered; the sequence is GKVDRKALQDKPLPTEPDSS. Residues 3515–3594 enclose the Carrier 2 domain; sequence EALSLAEGEL…RMATLIDAEK (80 aa). An O-(pantetheine 4'-phosphoryl)serine modification is found at Ser3554. The reductase (RED) domain stretch occupies residues 3633 to 3833; that stretch reads LTGSTGFLGM…RFSVLMKVVP (201 aa).

In the C-terminal section; belongs to the NRP synthetase family.

Hybrid PKS-NRPS synthetase; part of the gene cluster 23 that mediates the biosynthesis of a family of 2-pyridones known as leporins. The hybrid PKS-NRPS synthetase lepA and the enoyl reductase lepG are responsible for fusion of phenylalanine with a hexaketide and subsequent release of the stable tetramic acid precursor, pre-leporin C. Because lepA lacks a designated enoylreductase (ER) domain, the required activity is provided the enoyl reductase lepG. It is possible that the dehydrogenase lepF also participates in production of pre-leporin C. Cytochrome P450 monooxygenase lepH is then required for the ring expansion step to yield leporin C. Leporin C is then presumably further oxidized by the N-hydroxylase lepD to form leporin B. LepI may possess a function in biosynthesis upstream of lepA. Leporin B is further oxidized in the presence of ferric ion to give the leporin B trimer-iron chelate, but whether or not this reaction is catalyzed by an enzyme in the pathway or by ferric ion is not determined yet. The chain is Hybrid PKS-NRPS synthetase lepA from Aspergillus flavus (strain ATCC 200026 / FGSC A1120 / IAM 13836 / NRRL 3357 / JCM 12722 / SRRC 167).